Consider the following 555-residue polypeptide: E3 ubiquitin-protein ligase ARIH1 (555 aa).

Acidic residues predominate over residues 1–47; that stretch reads MDSDEGYNYEFDEDEECSEEDSGAEEEEDDDEDEPDDDNLDLGEVEL. Residues 1–93 are disordered; the sequence is MDSDEGYNYE…GGGGGPGHEQ (93 aa). Residues 65–90 show a composition bias toward gly residues; the sequence is ETGGGGGSALGPGGGGGGGGGGGGPG. The tract at residues 103-151 is UBA-like; that stretch reads TAEQILQHMVECIREVNEVIQNPATITRILLSHFNWDKEKLMERYFDGN. Lys-140 is subject to N6-acetyllysine. A TRIAD supradomain region spans residues 180–391; that stretch reads QDMPCQICYL…SAWYNCNRYN (212 aa). Zn(2+) contacts are provided by Cys-184, Cys-187, Cys-201, His-203, Cys-206, Cys-209, Cys-229, Cys-234, Cys-274, Cys-279, Cys-295, Cys-297, Cys-302, Cys-305, His-310, Cys-315, Cys-342, and Cys-345. The RING-type 1 zinc finger occupies 184–234; it reads CQICYLNYPNSYFTGLECGHKFCMQCWSEYLTTKIMEEGMGQTISCPAHGC. Residues 254–315 form an IBR-type zinc finger; the sequence is LKYQHLITNS…GENWHDPVKC (62 aa). An RING-type 2; atypical zinc finger spans residues 342-373; sequence CPKCHVTIEKDGGCNHMVCRNQNCKAEFCWVC. Cys-355 is an active-site residue. Zn(2+) contacts are provided by Cys-360, Cys-365, Cys-370, Cys-373, His-380, and Cys-387. The interval 406–555 is ariadne domain; the sequence is RAALQRYLFY…EKDLWEYIED (150 aa).

Belongs to the RBR family. Ariadne subfamily. As to quaternary structure, interacts (via the first RING-type zinc finger) with UBE2L3. Associates with cullin-RING ubiquitin ligase (CRL) complexes containing CUL1, CUL2 and CUL3. Interacts with neddylated CUL1. Interacts with neddylated CUL2. Interacts with neddylated CUL3. Interacts with neddylated CUL4A. Widely expressed.

It localises to the cytoplasm. The protein localises to the nucleus. The protein resides in the cajal body. It catalyses the reaction [E2 ubiquitin-conjugating enzyme]-S-ubiquitinyl-L-cysteine + [acceptor protein]-L-lysine = [E2 ubiquitin-conjugating enzyme]-L-cysteine + [acceptor protein]-N(6)-ubiquitinyl-L-lysine.. Its pathway is protein modification; protein ubiquitination. Its activity is regulated as follows. Autoinhibited by the ariadne domain, which masks the second RING-type zinc finger that contains the active site and inhibits the E3 activity. Inhibition is relieved upon binding to neddylated cullin-RING ubiquitin ligase complexes, which activate the E3 ligase activity of ARIH1. Its function is as follows. E3 ubiquitin-protein ligase, which catalyzes ubiquitination of target proteins together with ubiquitin-conjugating enzyme E2 UBE2L3. Acts as an atypical E3 ubiquitin-protein ligase by working together with cullin-RING ubiquitin ligase (CRL) complexes and initiating ubiquitination of CRL substrates: associates with CRL complexes and specifically mediates addition of the first ubiquitin on CRLs targets. The initial ubiquitin is then elongated by CDC34/UBE2R1 and UBE2R2. E3 ubiquitin-protein ligase activity is activated upon binding to neddylated cullin-RING ubiquitin ligase complexes. Plays a role in protein translation in response to DNA damage by mediating ubiquitination of EIF4E2, the consequences of EIF4E2 ubiquitination are however unclear. According to a report, EIF4E2 ubiquitination leads to promote EIF4E2 cap-binding and protein translation arrest. According to another report EIF4E2 ubiquitination leads to its subsequent degradation. Acts as the ligase involved in ISGylation of EIF4E2. In vitro, controls the degradation of the LINC (LInker of Nucleoskeleton and Cytoskeleton) complex member SUN2 and may therefore have a role in the formation and localization of the LINC complex, and as a consequence, may act in nuclear subcellular localization and nuclear morphology. This Mus musculus (Mouse) protein is E3 ubiquitin-protein ligase ARIH1 (Arih1).